A 785-amino-acid polypeptide reads, in one-letter code: Endonuclease MutS2 (785 aa).

Residue 333–340 participates in ATP binding; sequence GPNTGGKT. The Smr domain occupies 710-785; the sequence is LDLRGQRYDE…GNGATIVQLK (76 aa).

It belongs to the DNA mismatch repair MutS family. MutS2 subfamily. In terms of assembly, homodimer. Binds to stalled ribosomes, contacting rRNA.

Functionally, endonuclease that is involved in the suppression of homologous recombination and thus may have a key role in the control of bacterial genetic diversity. Acts as a ribosome collision sensor, splitting the ribosome into its 2 subunits. Detects stalled/collided 70S ribosomes which it binds and splits by an ATP-hydrolysis driven conformational change. Acts upstream of the ribosome quality control system (RQC), a ribosome-associated complex that mediates the extraction of incompletely synthesized nascent chains from stalled ribosomes and their subsequent degradation. Probably generates substrates for RQC. The sequence is that of Endonuclease MutS2 from Lactobacillus acidophilus (strain ATCC 700396 / NCK56 / N2 / NCFM).